The chain runs to 348 residues: MNITVAIDCMGGDHGPHITVPSAVEYMHHDCETNIILVGKPEVISRELDALKVSPGSRLRLHPANEVVGMDEHPAVALRNKKDSSMRVALNLIKSGEAQACISAGNTGALLATSRFVLKTIPGIDRPALAVILPTISGHTYVLDLGANVNCTAEHLLQFGIMGATLVSSVENKPNPSIGLLNVGEEDIKGNDVVKRAAELFRSSGLNFYGNIEGDDIYRGTTNVVVCDGFVGNVALKTSEGLAQMLASYLREEFRRSLFSRLAGLVALPVINAFRRRVDHRQYNGASLLGLRGVVIKSHGSADSYAFRCAIRRAVEEVRGGTLRNIVEHIETLRNNIEQNIAQPVSIE.

It belongs to the PlsX family. In terms of assembly, homodimer. Probably interacts with PlsY.

It is found in the cytoplasm. It carries out the reaction a fatty acyl-[ACP] + phosphate = an acyl phosphate + holo-[ACP]. The protein operates within lipid metabolism; phospholipid metabolism. Its function is as follows. Catalyzes the reversible formation of acyl-phosphate (acyl-PO(4)) from acyl-[acyl-carrier-protein] (acyl-ACP). This enzyme utilizes acyl-ACP as fatty acyl donor, but not acyl-CoA. This chain is Phosphate acyltransferase, found in Nitrosomonas europaea (strain ATCC 19718 / CIP 103999 / KCTC 2705 / NBRC 14298).